The sequence spans 159 residues: 6,7-dimethyl-8-ribityllumazine synthase (159 aa).

5-amino-6-(D-ribitylamino)uracil contacts are provided by residues Trp26, 57–59 (ALE), and 79–81 (CVV). Residue 84 to 85 (GT) participates in (2S)-2-hydroxy-3-oxobutyl phosphate binding. His87 serves as the catalytic Proton donor. A 5-amino-6-(D-ribitylamino)uracil-binding site is contributed by Asn112. Position 126 (Arg126) interacts with (2S)-2-hydroxy-3-oxobutyl phosphate.

It belongs to the DMRL synthase family.

It carries out the reaction (2S)-2-hydroxy-3-oxobutyl phosphate + 5-amino-6-(D-ribitylamino)uracil = 6,7-dimethyl-8-(1-D-ribityl)lumazine + phosphate + 2 H2O + H(+). The protein operates within cofactor biosynthesis; riboflavin biosynthesis; riboflavin from 2-hydroxy-3-oxobutyl phosphate and 5-amino-6-(D-ribitylamino)uracil: step 1/2. Its function is as follows. Catalyzes the formation of 6,7-dimethyl-8-ribityllumazine by condensation of 5-amino-6-(D-ribitylamino)uracil with 3,4-dihydroxy-2-butanone 4-phosphate. This is the penultimate step in the biosynthesis of riboflavin. This Corynebacterium glutamicum (strain ATCC 13032 / DSM 20300 / JCM 1318 / BCRC 11384 / CCUG 27702 / LMG 3730 / NBRC 12168 / NCIMB 10025 / NRRL B-2784 / 534) protein is 6,7-dimethyl-8-ribityllumazine synthase.